The chain runs to 534 residues: Cytochrome c oxidase subunit 1 (534 aa).

Residues 16-36 form a helical membrane-spanning segment; it reads VLYFMLAIFSGMAGTAMSLII. Ca(2+) is bound by residues Glu39, Ala42, and Gly44. 6 helical membrane-spanning segments follow: residues 57 to 77, 101 to 121, 147 to 167, 182 to 202, 235 to 255, and 267 to 287; these read VLVVGHAVLMIFFLVMPALIG, IAFWVLPMGLVCLVTSTLVES, AIFALHLTSISSLLGAINFIV, LPLFVWSIFITAFLLLLSLPV, LFYFFGHPEVYILIIPGFGII, and VFGEISMVYAMASIGLLGFLV. His62 serves as a coordination point for Fe(II)-heme a. His241 provides a ligand contact to Cu cation. Positions 241-245 form a cross-link, 1'-histidyl-3'-tyrosine (His-Tyr); it reads HPEVY. Position 245 (Tyr245) interacts with O2. 2 residues coordinate Cu cation: His290 and His291. 2 helical membrane-spanning segments follow: residues 310 to 330 and 338 to 358; these read MIIAIPTGIKIFSWLATIYGG and MLYAIAFLFLFTMGGLTGVAL. The Mg(2+) site is built by His368 and Asp369. 2 consecutive transmembrane segments (helical) span residues 372–392 and 414–434; these read YVVGHFHYVLSMGAIFSLFAG and FWLIFIGANVIFFPMHFLGIN. His376 is a heme a3 binding site. His378 contacts Fe(II)-heme a. Residue Pro441 participates in Ca(2+) binding. The chain crosses the membrane as a helical span at residues 452-472; sequence YVASIGSFIATLSLFLFIYIL.

This sequence belongs to the heme-copper respiratory oxidase family. In terms of assembly, component of the cytochrome c oxidase (complex IV, CIV), a multisubunit enzyme composed of a catalytic core of 3 subunits and several supernumerary subunits. The complex exists as a monomer or a dimer and forms supercomplexes (SCs) in the inner mitochondrial membrane with ubiquinol-cytochrome c oxidoreductase (cytochrome b-c1 complex, complex III, CIII). Heme serves as cofactor. It depends on Cu cation as a cofactor.

It is found in the mitochondrion inner membrane. It carries out the reaction 4 Fe(II)-[cytochrome c] + O2 + 8 H(+)(in) = 4 Fe(III)-[cytochrome c] + 2 H2O + 4 H(+)(out). It participates in energy metabolism; oxidative phosphorylation. Component of the cytochrome c oxidase, the last enzyme in the mitochondrial electron transport chain which drives oxidative phosphorylation. The respiratory chain contains 3 multisubunit complexes succinate dehydrogenase (complex II, CII), ubiquinol-cytochrome c oxidoreductase (cytochrome b-c1 complex, complex III, CIII) and cytochrome c oxidase (complex IV, CIV), that cooperate to transfer electrons derived from NADH and succinate to molecular oxygen, creating an electrochemical gradient over the inner membrane that drives transmembrane transport and the ATP synthase. Cytochrome c oxidase is the component of the respiratory chain that catalyzes the reduction of oxygen to water. Electrons originating from reduced cytochrome c in the intermembrane space (IMS) are transferred via the dinuclear copper A center (CU(A)) of subunit 2 and heme A of subunit 1 to the active site in subunit 1, a binuclear center (BNC) formed by heme A3 and copper B (CU(B)). The BNC reduces molecular oxygen to 2 water molecules using 4 electrons from cytochrome c in the IMS and 4 protons from the mitochondrial matrix. This Saccharomyces paradoxus (Yeast) protein is Cytochrome c oxidase subunit 1 (COXI).